Here is a 339-residue protein sequence, read N- to C-terminus: Endo-beta-N-acetylglucosaminidase F1 (339 aa).

The segment at residues 1–50 (MKKFINQFSASLKNNILVFLAFPFVWTSCARDNPLSSENSNISPNAAARA) is a signal peptide (or 51, or 52). Residues 60-326 (IKLFSFTEVN…KLIAKELYGD (267 aa)) enclose the GH18 domain. Catalysis depends on glutamate 182, which acts as the Proton donor. Position 339 (tryptophan 339) is a propeptide, removed in mature form.

This sequence belongs to the glycosyl hydrolase 18 family. Monomer.

Its subcellular location is the secreted. The enzyme catalyses an N(4)-(oligosaccharide-(1-&gt;3)-[oligosaccharide-(1-&gt;6)]-beta-D-Man-(1-&gt;4)-beta-D-GlcNAc-(1-&gt;4)-alpha-D-GlcNAc)-L-asparaginyl-[protein] + H2O = an oligosaccharide-(1-&gt;3)-[oligosaccharide-(1-&gt;6)]-beta-D-Man-(1-&gt;4)-D-GlcNAc + N(4)-(N-acetyl-beta-D-glucosaminyl)-L-asparaginyl-[protein]. Endohydrolysis of the di-N-acetylchitobiosyl unit in high-mannose glycopeptides and glycoproteins. Does not hydrolyze complex bi- or triantennary glycans. The presence of a core-bound fucose impedes endo F1 hydrolysis. This Elizabethkingia meningoseptica (Chryseobacterium meningosepticum) protein is Endo-beta-N-acetylglucosaminidase F1 (endOF1).